We begin with the raw amino-acid sequence, 202 residues long: Nucleoside triphosphate pyrophosphatase (202 aa).

The active-site Proton acceptor is D79.

Belongs to the Maf family. A divalent metal cation is required as a cofactor.

It is found in the cytoplasm. The catalysed reaction is a ribonucleoside 5'-triphosphate + H2O = a ribonucleoside 5'-phosphate + diphosphate + H(+). The enzyme catalyses a 2'-deoxyribonucleoside 5'-triphosphate + H2O = a 2'-deoxyribonucleoside 5'-phosphate + diphosphate + H(+). In terms of biological role, nucleoside triphosphate pyrophosphatase. May have a dual role in cell division arrest and in preventing the incorporation of modified nucleotides into cellular nucleic acids. The polypeptide is Nucleoside triphosphate pyrophosphatase (Rhodopseudomonas palustris (strain ATCC BAA-98 / CGA009)).